The chain runs to 163 residues: Large ribosomal subunit protein eL24y (163 aa).

Positions 119–133 (IKKTKDEKKAKKVEF) are enriched in basic and acidic residues. Residues 119-163 (IKKTKDEKKAKKVEFASKQQKVKANFPKAAAASKGPKVGGGGGKR) form a disordered region.

The protein belongs to the eukaryotic ribosomal protein eL24 family. Interacts with REIL1 and REIL2. Component of the large ribosomal subunit. As to expression, ubiquitous.

It is found in the cytoplasm. The protein resides in the nucleus. It localises to the nucleolus. Its subcellular location is the nucleoplasm. In terms of biological role, might have an extraribosomal function in reinitiation of translation of ETTIN and MONOPTEROS genes that are involved in the auxin-mediated gynoecium patterning. Essential in leaf polarity establishment, probably having a role for translation in leaf dorsoventral patterning to specify leaf adaxial identity. The sequence is that of Large ribosomal subunit protein eL24y from Arabidopsis thaliana (Mouse-ear cress).